A 109-amino-acid chain; its full sequence is Latartoxin-2a (109 aa).

The N-terminal stretch at 1 to 19 (MKVLVIIALCLVAFQSALS) is a signal peptide. The propeptide at 20 to 37 (KKIENFESYIEDLKSEAR) is removed in mature form. The short motif at 34–37 (SEAR) is the Processing quadruplet motif element. 5 cysteine pairs are disulfide-bonded: Cys-39–Cys-56, Cys-46–Cys-67, Cys-55–Cys-81, Cys-69–Cys-79, and Cys-72–Cys-93. At Val-108 the chain carries Valine amide.

Belongs to the neurotoxin 19 (CSTX) family. 11 (latartoxin) subfamily. In terms of processing, contains 5 disulfide bonds. Cleavage of the propeptide depends on the processing quadruplet motif (XXXR, with at least one of X being E). As to expression, expressed by the venom gland.

The protein resides in the secreted. In terms of biological role, insect toxin. Causes paralysis in larvae of C.vicina by depolarizing membranes at the neuromuscular junction. The protein is Latartoxin-2a of Lachesana tarabaevi (Spider).